Reading from the N-terminus, the 670-residue chain is Solute carrier organic anion transporter family member 1A5 (670 aa).

Over 1–20 (MGETEKRVATHEVRCFSKIK) the chain is Cytoplasmic. Residues 21-40 (MFLLALTWAYVSKSLSGIYM) form a helical membrane-spanning segment. Topologically, residues 41–59 (NTMLTQIERQFDIPTSIVG) are extracellular. The helical transmembrane segment at 60 to 80 (FINGSFEIGNLLLIIFVSYFG) threads the bilayer. Topologically, residues 81–86 (TKLHRP) are cytoplasmic. Residues 87-111 (IMIGVGCVIMGLGCFLMSLPHFLMG) form a helical membrane-spanning segment. The Extracellular portion of the chain corresponds to 112-155 (RYEYETTISPTSNLSSNSFLCMENRSQTLKPTQDPAECIKEMKS). Asn124 and Asn135 each carry an N-linked (GlcNAc...) asparagine glycan. A helical transmembrane segment spans residues 156–184 (LMWIYVLVGNIIRGIGETPIMPLGISYIE). At 185-203 (DFAKSENSPLYIGILETGK) the chain is on the cytoplasmic side. Residues 204–224 (VFGPIVGLLLGSFCASIYVDT) traverse the membrane as a helical segment. The Extracellular segment spans residues 225-242 (GSVNTDDLTITPTDTRWV). The helical transmembrane segment at 243 to 267 (GAWWIGFLICAGVNILSSIPFFFFP) threads the bilayer. The Cytoplasmic segment spans residues 268 to 311 (KTLPKEGLQDDVDGTNNDKEEKHREKAKEENRGITKDFLPFMKS). The helical transmembrane segment at 312-333 (LSCNPIYMLLILTSVLQINAFI) threads the bilayer. Residues 334 to 353 (NMFTFLPKYLEQQYGKSTAE) lie on the Extracellular side of the membrane. A helical transmembrane segment spans residues 354 to 377 (VVLLIGVYNLPPICIGYLLIGFIM). Over 378–381 (KKFK) the chain is Cytoplasmic. A helical membrane pass occupies residues 382–405 (ITVKKAAYMAFCLSLFEYLLYFLH). Residues 406 to 513 (FMITCDNFPV…PECANKLQYF (108 aa)) are Extracellular-facing. The region spanning 433–488 (NKVLADCNRGCSCSTNSWDPVCGDNGLAYMSACLAGCKKSVGTGTNMVFQNCSCIR) is the Kazal-like domain. Intrachain disulfides connect Cys439-Cys469, Cys445-Cys465, and Cys454-Cys486. 2 N-linked (GlcNAc...) asparagine glycosylation sites follow: Asn483 and Asn492. Residues 514 to 536 (LIMSVIGSFIYSITAIPGYMVLL) form a helical membrane-spanning segment. At 537–545 (RCIKPEEKS) the chain is on the cytoplasmic side. Residues 546 to 571 (LGIGLHAFCTRVFAGIPAPIYFGALI) traverse the membrane as a helical segment. Residues 572 to 605 (DRTCLHWGTLKCGEPGACRMYNINNFRRIYLVLP) are Extracellular-facing. The chain crosses the membrane as a helical span at residues 606–623 (AALRGSSYLPALFILILM). Residues 624–670 (RKFQFPGEIDSSETELAEMKITVKKSECTDVHGSPQVENDGELKTRL) are Cytoplasmic-facing.

The protein belongs to the organo anion transporter (TC 2.A.60) family. In terms of tissue distribution, highly expressed in the kidney, moderately abundant in the retina, and even lower in the liver. Expressed (at protein level) in the small intestine. Expressed at lower levels in brain,lung, and retina.

It localises to the cell membrane. The protein localises to the basal cell membrane. The enzyme catalyses taurocholate(out) = taurocholate(in). It catalyses the reaction glycocholate(out) = glycocholate(in). It carries out the reaction taurochenodeoxycholate(out) = taurochenodeoxycholate(in). The catalysed reaction is tauroursodeoxycholate(out) = tauroursodeoxycholate(in). The enzyme catalyses 3,3',5'-triiodo-L-thyronine(out) = 3,3',5'-triiodo-L-thyronine(in). It catalyses the reaction L-thyroxine(out) = L-thyroxine(in). It carries out the reaction taurodeoxycholate(out) = taurodeoxycholate(in). The catalysed reaction is glycodeoxycholate(out) = glycodeoxycholate(in). The enzyme catalyses glycochenodeoxycholate(out) = glycochenodeoxycholate(in). It catalyses the reaction glycoursodeoxycholate(out) = glycoursodeoxycholate(in). It carries out the reaction estrone 3-sulfate(out) = estrone 3-sulfate(in). The catalysed reaction is prostaglandin E2(out) = prostaglandin E2(in). The enzyme catalyses substance P(out) = substance P(in). In terms of biological role, na(+)-independent transporter that mediates the cellular uptake of a broad range of organic anions such as the endogenous bile salts cholate and deoxycholate, either in their unconjugated or conjugated forms (taurocholate and glycocholate), estrone 3-sulfate and prostaglandin E2, at the plasma membrane. Responsible for intestinal absorption of bile acids. Capable of thyroid hormone transport (both T3 or 3,3',5'-triiodo-L-thyronine, and T4 or L-tyroxine). Plays roles in blood-brain and -cerebrospinal fluid barrier transport of organic anions and signal mediators, and in hormone uptake by neural cells. May also play a role in the reuptake of neuropeptides such as substance P/TAC1 and vasoactive intestinal peptide/VIP released from retinal neurons. Shows a pH-sensitive substrate specificity which may be ascribed to the protonation state of the binding site and leads to a stimulation of substrate transport in an acidic microenvironment. Hydrogencarbonate/HCO3(-) acts as the probable counteranion that exchanges for organic anions. May contribute to regulate the transport of organic compounds in testis across the blood-testis-barrier. In Rattus norvegicus (Rat), this protein is Solute carrier organic anion transporter family member 1A5 (Slco1a5).